A 358-amino-acid polypeptide reads, in one-letter code: 3-dehydroquinate synthase (358 aa).

NAD(+) is bound by residues 69–74 (DGEAHK), 103–107 (GVIGD), 127–128 (TT), Lys140, Lys149, and 167–170 (CLRT). Positions 182, 245, and 262 each coordinate Zn(2+).

It belongs to the sugar phosphate cyclases superfamily. Dehydroquinate synthase family. Requires Co(2+) as cofactor. Zn(2+) serves as cofactor. The cofactor is NAD(+).

Its subcellular location is the cytoplasm. It carries out the reaction 7-phospho-2-dehydro-3-deoxy-D-arabino-heptonate = 3-dehydroquinate + phosphate. It participates in metabolic intermediate biosynthesis; chorismate biosynthesis; chorismate from D-erythrose 4-phosphate and phosphoenolpyruvate: step 2/7. In terms of biological role, catalyzes the conversion of 3-deoxy-D-arabino-heptulosonate 7-phosphate (DAHP) to dehydroquinate (DHQ). This is 3-dehydroquinate synthase from Tolumonas auensis (strain DSM 9187 / NBRC 110442 / TA 4).